Here is a 64-residue protein sequence, read N- to C-terminus: Large ribosomal subunit protein uL29 (64 aa).

This sequence belongs to the universal ribosomal protein uL29 family.

This Ligilactobacillus salivarius (strain UCC118) (Lactobacillus salivarius) protein is Large ribosomal subunit protein uL29.